The sequence spans 93 residues: Phosphoribosyl-ATP pyrophosphatase (93 aa).

This sequence belongs to the PRA-PH family.

The protein localises to the cytoplasm. It carries out the reaction 1-(5-phospho-beta-D-ribosyl)-ATP + H2O = 1-(5-phospho-beta-D-ribosyl)-5'-AMP + diphosphate + H(+). It participates in amino-acid biosynthesis; L-histidine biosynthesis; L-histidine from 5-phospho-alpha-D-ribose 1-diphosphate: step 2/9. The polypeptide is Phosphoribosyl-ATP pyrophosphatase (Mycobacterium sp. (strain JLS)).